The chain runs to 493 residues: tRNA(Ile)-lysidine synthase, chloroplastic (493 aa).

Residue 68-73 (SGGQDS) coordinates ATP.

It belongs to the tRNA(Ile)-lysidine synthase family.

The protein resides in the plastid. The protein localises to the chloroplast. It catalyses the reaction cytidine(34) in tRNA(Ile2) + L-lysine + ATP = lysidine(34) in tRNA(Ile2) + AMP + diphosphate + H(+). Its function is as follows. Ligates lysine onto the cytidine present at position 34 of the AUA codon-specific tRNA(Ile) that contains the anticodon CAU, in an ATP-dependent manner. Cytidine is converted to lysidine, thus changing the amino acid specificity of the tRNA from methionine to isoleucine. In Staurastrum punctulatum (Green alga), this protein is tRNA(Ile)-lysidine synthase, chloroplastic.